The primary structure comprises 103 residues: UPF0145 protein BC_5181 (103 aa).

The protein belongs to the UPF0145 family.

This is UPF0145 protein BC_5181 from Bacillus cereus (strain ATCC 14579 / DSM 31 / CCUG 7414 / JCM 2152 / NBRC 15305 / NCIMB 9373 / NCTC 2599 / NRRL B-3711).